Here is a 1185-residue protein sequence, read N- to C-terminus: Pyruvate carboxylase (1185 aa).

The 453-residue stretch at 32–484 folds into the Biotin carboxylation domain; that stretch reads KFTKVLVANR…WTTFIDDTPE (453 aa). The ATP site is built by Lys150, Glu234, and His269. Positions 154–351 constitute an ATP-grasp domain; that stretch reads RAIAIRCGVP…IVSAQLHVAA (198 aa). Residue Arg326 is part of the active site. The Pyruvate carboxyltransferase domain occupies 570–838; sequence GLIMDTTWRD…QLEFDNNQLR (269 aa). Residues 578-582 and Arg651 each bind substrate; that span reads RDAHQ. Asp579 provides a ligand contact to a divalent metal cation. A divalent metal cation-binding residues include Lys747, His777, and His779. Residue Lys747 is modified to N6-carboxylysine. Thr912 serves as a coordination point for substrate. Positions 1108–1183 constitute a Biotinyl-binding domain; the sequence is RADPGNPGHV…NGGDLCAVLE (76 aa). The residue at position 1149 (Lys1149) is an N6-biotinyllysine.

The cofactor is biotin. Requires Zn(2+) as cofactor.

The protein localises to the cytoplasm. It carries out the reaction hydrogencarbonate + pyruvate + ATP = oxaloacetate + ADP + phosphate + H(+). Its pathway is carbohydrate biosynthesis; gluconeogenesis. Functionally, pyruvate carboxylase catalyzes a 2-step reaction, involving the ATP-dependent carboxylation of the covalently attached biotin in the first step and the transfer of the carboxyl group to pyruvate in the second. This is Pyruvate carboxylase (pyr1) from Schizosaccharomyces pombe (strain 972 / ATCC 24843) (Fission yeast).